The primary structure comprises 197 residues: Tic20 family protein Ycf60 (197 aa).

5 helical membrane-spanning segments follow: residues 3-23 (IIIASYGVLIIVLAIGIGVGV), 47-66 (FGYYLLPVLECMTHCGPDVL), 81-101 (LVVVYSTYPILGFMIFFMSYF), 118-138 (VSQALIIYLLTSIIGSLLNAL), and 141-161 (MILMGWFGSTCLDILFILTMG).

This sequence belongs to the Tic20 family.

It localises to the plastid. Its subcellular location is the chloroplast membrane. The chain is Tic20 family protein Ycf60 (ycf60) from Cyanidioschyzon merolae (strain NIES-3377 / 10D) (Unicellular red alga).